A 91-amino-acid chain; its full sequence is Conotoxin Im9.1 (91 aa).

The first 23 residues, 1–23, serve as a signal peptide directing secretion; sequence MSKVGVVPLIFLVLLSIAALQNG. Residues 24 to 55 constitute a propeptide that is removed on maturation; that stretch reads DDPRRQRDEKQSPQGDILRSTLTKYSYNIQRR. 3 disulfide bridges follow: cysteine 56–cysteine 72, cysteine 63–cysteine 83, and cysteine 66–cysteine 86.

Belongs to the conotoxin M superfamily. Expressed by the venom duct.

Its subcellular location is the secreted. Functionally, probable neurotoxin. The protein is Conotoxin Im9.1 of Conus imperialis (Imperial cone).